Consider the following 484-residue polypeptide: tRNA sulfurtransferase (484 aa).

The THUMP domain occupies 63 to 167; sequence QAFGERLACI…GDKLYMVTKR (105 aa). ATP-binding positions include 185–186, Lys-267, Gly-289, and Gln-298; that span reads LI. A disulfide bridge connects residues Cys-346 and Cys-458. A Rhodanese domain is found at 406-484; the sequence is IDTNEVVIDI…GYHNVKVYRP (79 aa). Cys-458 serves as the catalytic Cysteine persulfide intermediate.

It belongs to the ThiI family.

It localises to the cytoplasm. The enzyme catalyses [ThiI sulfur-carrier protein]-S-sulfanyl-L-cysteine + a uridine in tRNA + 2 reduced [2Fe-2S]-[ferredoxin] + ATP + H(+) = [ThiI sulfur-carrier protein]-L-cysteine + a 4-thiouridine in tRNA + 2 oxidized [2Fe-2S]-[ferredoxin] + AMP + diphosphate. It carries out the reaction [ThiS sulfur-carrier protein]-C-terminal Gly-Gly-AMP + S-sulfanyl-L-cysteinyl-[cysteine desulfurase] + AH2 = [ThiS sulfur-carrier protein]-C-terminal-Gly-aminoethanethioate + L-cysteinyl-[cysteine desulfurase] + A + AMP + 2 H(+). Its pathway is cofactor biosynthesis; thiamine diphosphate biosynthesis. In terms of biological role, catalyzes the ATP-dependent transfer of a sulfur to tRNA to produce 4-thiouridine in position 8 of tRNAs, which functions as a near-UV photosensor. Also catalyzes the transfer of sulfur to the sulfur carrier protein ThiS, forming ThiS-thiocarboxylate. This is a step in the synthesis of thiazole, in the thiamine biosynthesis pathway. The sulfur is donated as persulfide by IscS. This Shewanella sp. (strain MR-4) protein is tRNA sulfurtransferase.